A 319-amino-acid polypeptide reads, in one-letter code: MRSSRILGIGSYLPKSLVTNDDLACTVATSDEWIVKRTGIRQRYIAADDQMTSDMAVEAAKLALNDSGINKQDVDLIVVATTTPDRTFPSCATIVQSKLECKNAFAFDIQAVCSGFIYAMAIADNFIKSGQVNVSLVIGAEVMSRILDWKDRSTCVLFGDGAGAVVLSNNSARNTGVISTILYSDGTLHNLLYTSGGTAYNGVAGTICMNGTVVFEHAIEKLSASIVEILNKNNLSIDEVNWFVLHQANIRIIELVARRLKIPSEKMVISINQHANTSAASIPLALSYAKNSGKLKQDDLVVLAAIGAGITWGVCLVRM.

Catalysis depends on residues cysteine 113 and histidine 246. The tract at residues 247–251 is ACP-binding; sequence QANIR. Asparagine 276 is an active-site residue.

The protein belongs to the thiolase-like superfamily. FabH family. In terms of assembly, homodimer.

It is found in the cytoplasm. It catalyses the reaction malonyl-[ACP] + acetyl-CoA + H(+) = 3-oxobutanoyl-[ACP] + CO2 + CoA. It functions in the pathway lipid metabolism; fatty acid biosynthesis. Functionally, catalyzes the condensation reaction of fatty acid synthesis by the addition to an acyl acceptor of two carbons from malonyl-ACP. Catalyzes the first condensation reaction which initiates fatty acid synthesis and may therefore play a role in governing the total rate of fatty acid production. Possesses both acetoacetyl-ACP synthase and acetyl transacylase activities. Its substrate specificity determines the biosynthesis of branched-chain and/or straight-chain of fatty acids. The protein is Beta-ketoacyl-[acyl-carrier-protein] synthase III of Ehrlichia ruminantium (strain Welgevonden).